A 155-amino-acid polypeptide reads, in one-letter code: Endoribonuclease YbeY (155 aa).

Residues histidine 114, histidine 118, and histidine 124 each coordinate Zn(2+).

Belongs to the endoribonuclease YbeY family. Zn(2+) serves as cofactor.

The protein resides in the cytoplasm. Functionally, single strand-specific metallo-endoribonuclease involved in late-stage 70S ribosome quality control and in maturation of the 3' terminus of the 16S rRNA. The protein is Endoribonuclease YbeY of Erwinia tasmaniensis (strain DSM 17950 / CFBP 7177 / CIP 109463 / NCPPB 4357 / Et1/99).